Reading from the N-terminus, the 1113-residue chain is Tudor domain-containing protein 7 (1113 aa).

HTH OST-type domains lie at 3–76 (EADL…YAVA) and 249–318 (KMDE…YPAK). A compositionally biased stretch (basic and acidic residues) spans 320 to 334 (EQPLRSDQDPEKERP). The interval 320 to 352 (EQPLRSDQDPEKERPPPPPAPRQEVPSKGSPAV) is disordered. The HTH OST-type 3 domain occupies 352-421 (VMPDVKEKVA…TQKAILYAKL (70 aa)). Tudor domains are found at residues 528–585 (TVHV…FCSL) and 718–775 (LPFC…FLQE). Residues 873 to 895 (SSPGNRNASTPAPGSPAESLRKS) form a disordered region. Ser874 is subject to Phosphoserine. A compositionally biased stretch (polar residues) spans 875-884 (PGNRNASTPA). Residues 876–1113 (GNRNASTPAP…QYLVELSKAN (238 aa)) are interaction with CDK17. The tract at residues 908–1113 (TSSFSLEELP…QYLVELSKAN (206 aa)) is interaction with CABLES1.

This sequence belongs to the TDRD7 family. As to quaternary structure, found in a mRNP complex, at least composed of TDRD1, TDRD6, TDRD7 and DDX4. Found in a complex containing CABLES1, CDK16 and CDK17. Interacts with CABLES1, CDK17 and PIWIL1. Expressed in brain and testis.

Its subcellular location is the cytoplasm. Functionally, component of specific cytoplasmic RNA granules involved in post-transcriptional regulation of specific genes: probably acts by binding to specific mRNAs and regulating their translation. Required for lens transparency during lens development, by regulating translation of genes such as CRYBB3 and HSPB1 in the developing lens. Also required during spermatogenesis. The sequence is that of Tudor domain-containing protein 7 (Tdrd7) from Rattus norvegicus (Rat).